A 473-amino-acid polypeptide reads, in one-letter code: Hexaprenyl pyrophosphate synthase, mitochondrial (473 aa).

K84, R87, and H186 together coordinate isopentenyl diphosphate. D193 and D197 together coordinate Mg(2+). R202 lines the an all-trans-polyprenyl diphosphate pocket. R203 contacts isopentenyl diphosphate. Residues K323, T324, Q361, and K378 each contribute to the an all-trans-polyprenyl diphosphate site.

The protein belongs to the FPP/GGPP synthase family. Mg(2+) serves as cofactor.

The protein resides in the mitochondrion inner membrane. It participates in cofactor biosynthesis; ubiquinone biosynthesis. Assembly of polyisoprenoid side chains. The polyprenyl synthase of coenzyme Q biosynthesis catalyzes the formation from isopentenyl diphosphate of all trans-polyprenyl pyrophosphates generally ranging in length of between 6 and 10 isoprene units depending on the species. The chain is Hexaprenyl pyrophosphate synthase, mitochondrial (COQ1) from Saccharomyces cerevisiae (strain ATCC 204508 / S288c) (Baker's yeast).